A 439-amino-acid chain; its full sequence is UPF0229 protein Nham_0975 (439 aa).

Residues 39–106 form a disordered region; sequence RSGRISDADG…AGTPDPSMKD (68 aa). The segment covering 58-76 has biased composition (basic and acidic residues); that stretch reads STDEPRFEAAKDSGRREHV.

This sequence belongs to the UPF0229 family.

The polypeptide is UPF0229 protein Nham_0975 (Nitrobacter hamburgensis (strain DSM 10229 / NCIMB 13809 / X14)).